The sequence spans 163 residues: Keratin-associated protein 11-1 (163 aa).

4 repeat units span residues Cys-111–Val-120, Cys-121–Val-130, Cys-131–Val-140, and Cys-141–Thr-150. Residues Cys-111–Thr-150 form a 4 X 10 AA approximate repeats region.

The protein belongs to the PMG family. Expressed in the upper matrix and in the entire hair cortex.

Functionally, in the hair cortex, hair keratin intermediate filaments are embedded in an interfilamentous matrix, consisting of hair keratin-associated proteins (KRTAP), which are essential for the formation of a rigid and resistant hair shaft through their extensive disulfide bond cross-linking with abundant cysteine residues of hair keratins. The matrix proteins include the high-sulfur and high-glycine-tyrosine keratins. In Homo sapiens (Human), this protein is Keratin-associated protein 11-1 (KRTAP11-1).